The sequence spans 641 residues: Calpain-6 (641 aa).

Residues 26-343 form the Calpain catalytic domain; the sequence is LFCDPTFLPE…FHKLNVCRNV (318 aa). The interval 344–495 is domain III; it reads NNPIFGRKEL…IFSEVPVQLR (152 aa). Residues 498–621 enclose the C2 domain; it reads TLDMPKMSCW…YLRKKGGPTA (124 aa).

This sequence belongs to the peptidase C2 family. In terms of assembly, interacts (via domain III) with microtubules. Interacts (via domain II) with ARHGEF2 (via the N-terminal zinc finger). Expressed only in placenta.

The protein localises to the cytoplasm. Its subcellular location is the perinuclear region. It is found in the cytoskeleton. It localises to the spindle. Microtubule-stabilizing protein that may be involved in the regulation of microtubule dynamics and cytoskeletal organization. May act as a regulator of RAC1 activity through interaction with ARHGEF2 to control lamellipodial formation and cell mobility. Does not seem to have protease activity as it has lost the active site residues. In Homo sapiens (Human), this protein is Calpain-6 (CAPN6).